Reading from the N-terminus, the 317-residue chain is Probable cell division protein WhiA (317 aa).

Residues S281–K314 constitute a DNA-binding region (H-T-H motif).

The protein belongs to the WhiA family.

Its function is as follows. Involved in cell division and chromosome segregation. This Clostridium novyi (strain NT) protein is Probable cell division protein WhiA.